Consider the following 287-residue polypeptide: MQFLDFLIALLPALFWGSVVLINVFVGGGPYNQIRGTTLGALIVGLGLLITGFAKFNNPTVIIVGLISGALWAFGQANQLKSISLIGVSNTMPVSTGMQLVGTTLFSVIFLGEWSSMTQIIFGLIAMILLVTGVALTSLKAKNERQSDNPEFKKAMGILIVSTVGYVGFVVLGDIFGVGGTDALFFQSVGMAIGGFILSMNHKTSLKSTALNLLPGVIWGIGNLFMFYSQPKVGVATSFSLSQLLVIVSTLGGIFILGERKDRRQMTGIWAGIIIIVIAAIILGNLK.

Helical transmembrane passes span 7-29, 34-56, 58-75, 114-136, 156-178, 183-202, 209-228, 233-255, and 267-286; these read LIALLPALFWGSVVLINVFVGGG, IRGTTLGALIVGLGLLITGFAKF, NPTVIIVGLISGALWAFG, WSSMTQIIFGLIAMILLVTGVAL, MGILIVSTVGYVGFVVLGDIFGV, ALFFQSVGMAIGGFILSMNH, TALNLLPGVIWGIGNLFMFY, VGVATSFSLSQLLVIVSTLGGIF, and TGIWAGIIIIVIAAIILGNL.

The protein belongs to the GRP transporter (TC 2.A.7.5) family.

Its subcellular location is the cell membrane. Involved in the uptake of glucose. The polypeptide is Probable glucose uptake protein GlcU (glcU) (Staphylococcus aureus (strain COL)).